Here is a 309-residue protein sequence, read N- to C-terminus: tRNA uridine(34) hydroxylase (309 aa).

The 95-residue stretch at 123-217 folds into the Rhodanese domain; the sequence is DDPEVIVVDT…YLEEVPEEQT (95 aa). Residue cysteine 177 is the Cysteine persulfide intermediate of the active site.

This sequence belongs to the TrhO family.

It catalyses the reaction uridine(34) in tRNA + AH2 + O2 = 5-hydroxyuridine(34) in tRNA + A + H2O. Functionally, catalyzes oxygen-dependent 5-hydroxyuridine (ho5U) modification at position 34 in tRNAs. The sequence is that of tRNA uridine(34) hydroxylase from Saccharophagus degradans (strain 2-40 / ATCC 43961 / DSM 17024).